Reading from the N-terminus, the 101-residue chain is Urease subunit beta (101 aa).

Belongs to the urease beta subunit family. As to quaternary structure, heterotrimer of UreA (gamma), UreB (beta) and UreC (alpha) subunits. Three heterotrimers associate to form the active enzyme.

The protein resides in the cytoplasm. It carries out the reaction urea + 2 H2O + H(+) = hydrogencarbonate + 2 NH4(+). It participates in nitrogen metabolism; urea degradation; CO(2) and NH(3) from urea (urease route): step 1/1. The polypeptide is Urease subunit beta (Burkholderia ambifaria (strain ATCC BAA-244 / DSM 16087 / CCUG 44356 / LMG 19182 / AMMD) (Burkholderia cepacia (strain AMMD))).